We begin with the raw amino-acid sequence, 363 residues long: NAD(P)H-quinone oxidoreductase subunit 1, chloroplastic (363 aa).

The next 7 helical transmembrane spans lie at 26 to 46, 98 to 118, 127 to 147, 246 to 266, 268 to 288, 300 to 320, and 336 to 356; these read IIWILIPIFTLVLGITIGVLV, FSIGPSIAVISILLSYSVIPF, LTIGVFLWIAISSIAPIGLLM, TEYSGIKFGLFYVASYLNLLV, SLFVTVLYLGGWNLSIPYIFV, VFGPVIGIFITLAKTYLFLFI, and LLNLGWKFLLPISLGNLLLTT.

It belongs to the complex I subunit 1 family. NDH is composed of at least 16 different subunits, 5 of which are encoded in the nucleus.

The protein resides in the plastid. It is found in the chloroplast thylakoid membrane. The enzyme catalyses a plastoquinone + NADH + (n+1) H(+)(in) = a plastoquinol + NAD(+) + n H(+)(out). It catalyses the reaction a plastoquinone + NADPH + (n+1) H(+)(in) = a plastoquinol + NADP(+) + n H(+)(out). NDH shuttles electrons from NAD(P)H:plastoquinone, via FMN and iron-sulfur (Fe-S) centers, to quinones in the photosynthetic chain and possibly in a chloroplast respiratory chain. The immediate electron acceptor for the enzyme in this species is believed to be plastoquinone. Couples the redox reaction to proton translocation, and thus conserves the redox energy in a proton gradient. In Coffea arabica (Arabian coffee), this protein is NAD(P)H-quinone oxidoreductase subunit 1, chloroplastic.